A 450-amino-acid polypeptide reads, in one-letter code: Deoxyguanosinetriphosphate triphosphohydrolase-like protein (450 aa).

An HD domain is found at 61 to 274 (RLTHSLEVAQ…MELADDIAYA (214 aa)).

It belongs to the dGTPase family. Type 2 subfamily.

The chain is Deoxyguanosinetriphosphate triphosphohydrolase-like protein from Histophilus somni (strain 2336) (Haemophilus somnus).